Reading from the N-terminus, the 185-residue chain is Endoribonuclease YbeY (185 aa).

3 residues coordinate Zn(2+): His-135, His-139, and His-145.

The protein belongs to the endoribonuclease YbeY family. The cofactor is Zn(2+).

It localises to the cytoplasm. Single strand-specific metallo-endoribonuclease involved in late-stage 70S ribosome quality control and in maturation of the 3' terminus of the 16S rRNA. The chain is Endoribonuclease YbeY from Parasynechococcus marenigrum (strain WH8102).